Here is a 425-residue protein sequence, read N- to C-terminus: Histidinol dehydrogenase (425 aa).

Residues Ser-231, Gln-253, and His-256 each coordinate substrate. Zn(2+) contacts are provided by Gln-253 and His-256. Residues Glu-321 and His-322 each act as proton acceptor in the active site. Substrate contacts are provided by His-322, Asp-355, Glu-409, and His-414. Asp-355 is a binding site for Zn(2+). Position 414 (His-414) interacts with Zn(2+).

The protein belongs to the histidinol dehydrogenase family. Requires Zn(2+) as cofactor.

The catalysed reaction is L-histidinol + 2 NAD(+) + H2O = L-histidine + 2 NADH + 3 H(+). The protein operates within amino-acid biosynthesis; L-histidine biosynthesis; L-histidine from 5-phospho-alpha-D-ribose 1-diphosphate: step 9/9. In terms of biological role, catalyzes the sequential NAD-dependent oxidations of L-histidinol to L-histidinaldehyde and then to L-histidine. This Carboxydothermus hydrogenoformans (strain ATCC BAA-161 / DSM 6008 / Z-2901) protein is Histidinol dehydrogenase.